Reading from the N-terminus, the 226-residue chain is Ribonuclease 3 (226 aa).

The region spanning 6–128 is the RNase III domain; the sequence is INRLQRKLGY…LIGGVFLDSD (123 aa). Glu-41 lines the Mg(2+) pocket. The active site involves Asp-45. Residues Asp-114 and Glu-117 each contribute to the Mg(2+) site. Glu-117 is an active-site residue. The DRBM domain maps to 155–225; sequence DPKTRLQEYL…AEQALKKLEL (71 aa).

This sequence belongs to the ribonuclease III family. Homodimer. The cofactor is Mg(2+).

It localises to the cytoplasm. It catalyses the reaction Endonucleolytic cleavage to 5'-phosphomonoester.. Functionally, digests double-stranded RNA. Involved in the processing of primary rRNA transcript to yield the immediate precursors to the large and small rRNAs (23S and 16S). Processes some mRNAs, and tRNAs when they are encoded in the rRNA operon. Processes pre-crRNA and tracrRNA of type II CRISPR loci if present in the organism. The polypeptide is Ribonuclease 3 (Klebsiella pneumoniae (strain 342)).